The sequence spans 369 residues: Phospho-N-acetylmuramoyl-pentapeptide-transferase (369 aa).

10 helical membrane-spanning segments follow: residues 2–22, 54–74, 80–100, 113–133, 158–178, 195–215, 241–261, 268–288, 293–313, and 347–367; these read IAIL…TPFF, GLVI…FLGL, GLLV…DDIL, FYKV…TFLV, ALFS…LLWI, LDGL…VIGF, PLDM…FLWW, IMMG…LSIL, LLFL…ILQI, and FWII…ADWL.

It belongs to the glycosyltransferase 4 family. MraY subfamily. Mg(2+) is required as a cofactor.

Its subcellular location is the cell membrane. It catalyses the reaction UDP-N-acetyl-alpha-D-muramoyl-L-alanyl-gamma-D-glutamyl-meso-2,6-diaminopimeloyl-D-alanyl-D-alanine + di-trans,octa-cis-undecaprenyl phosphate = di-trans,octa-cis-undecaprenyl diphospho-N-acetyl-alpha-D-muramoyl-L-alanyl-D-glutamyl-meso-2,6-diaminopimeloyl-D-alanyl-D-alanine + UMP. Its pathway is cell wall biogenesis; peptidoglycan biosynthesis. Its function is as follows. Catalyzes the initial step of the lipid cycle reactions in the biosynthesis of the cell wall peptidoglycan: transfers peptidoglycan precursor phospho-MurNAc-pentapeptide from UDP-MurNAc-pentapeptide onto the lipid carrier undecaprenyl phosphate, yielding undecaprenyl-pyrophosphoryl-MurNAc-pentapeptide, known as lipid I. The protein is Phospho-N-acetylmuramoyl-pentapeptide-transferase of Tropheryma whipplei (strain TW08/27) (Whipple's bacillus).